The sequence spans 175 residues: MGKVLSKIFGNKEMRILMLGLDAAGKTTILYKLKLGQSVTTIPTVGFNVETVTYKNVKFNVWDVGGQDKIRPLWRHYYTGTQGLIFVVDCADRDRIDEARQELHRIINDREMRDAIILIFANKQDLPDAMKPHEIQEKLGLTRIRDRNWYVQPSCATTGDGLYEGLTWLTSNYKS.

The N-myristoyl glycine moiety is linked to residue G2. K3 carries the N6-myristoyl lysine lipid modification. GTP-binding positions include 23-28, 41-44, 63-67, 122-125, and 155-156; these read AAGKTT, TIPT, DVGGQ, NKQD, and CA.

It belongs to the small GTPase superfamily. Arf family.

The protein resides in the cytoplasm. It localises to the cytosol. The protein localises to the cell membrane. Its subcellular location is the endosome membrane. It is found in the recycling endosome membrane. The protein resides in the cell projection. It localises to the filopodium membrane. The protein localises to the ruffle. Its subcellular location is the cleavage furrow. It is found in the midbody. The protein resides in the midbody ring. The catalysed reaction is GTP + H2O = GDP + phosphate + H(+). Functionally, GTP-binding protein involved in protein trafficking; regulates endocytic recycling and cytoskeleton remodeling. May modulate vesicle budding and uncoating within the Golgi apparatus. May contribute to the regulation of dendritic branching, filopodia extension and dendritic spine development. This Gallus gallus (Chicken) protein is ADP-ribosylation factor 6 (ARF6).